Here is a 102-residue protein sequence, read N- to C-terminus: Citrate lyase acyl carrier protein (102 aa).

At S14 the chain carries O-(phosphoribosyl dephospho-coenzyme A)serine.

Belongs to the CitD family. As to quaternary structure, oligomer with a subunit composition of (alpha,beta,gamma)6.

Its subcellular location is the cytoplasm. In terms of biological role, covalent carrier of the coenzyme of citrate lyase. This is Citrate lyase acyl carrier protein from Streptococcus mutans serotype c (strain ATCC 700610 / UA159).